A 410-amino-acid polypeptide reads, in one-letter code: LL-diaminopimelate aminotransferase (410 aa).

Residues Y15 and G42 each contribute to the substrate site. Residues Y72, 108–109 (TK), Y132, N186, Y217, and 245–247 (SFS) contribute to the pyridoxal 5'-phosphate site. Residues K109, Y132, and N186 each coordinate substrate. The residue at position 248 (K248) is an N6-(pyridoxal phosphate)lysine. Pyridoxal 5'-phosphate contacts are provided by R256 and N291. 2 residues coordinate substrate: N291 and R387.

This sequence belongs to the class-I pyridoxal-phosphate-dependent aminotransferase family. LL-diaminopimelate aminotransferase subfamily. In terms of assembly, homodimer. Pyridoxal 5'-phosphate serves as cofactor.

It carries out the reaction (2S,6S)-2,6-diaminopimelate + 2-oxoglutarate = (S)-2,3,4,5-tetrahydrodipicolinate + L-glutamate + H2O + H(+). It functions in the pathway amino-acid biosynthesis; L-lysine biosynthesis via DAP pathway; LL-2,6-diaminopimelate from (S)-tetrahydrodipicolinate (aminotransferase route): step 1/1. Involved in the synthesis of meso-diaminopimelate (m-DAP or DL-DAP), required for both lysine and peptidoglycan biosynthesis. Catalyzes the direct conversion of tetrahydrodipicolinate to LL-diaminopimelate. The protein is LL-diaminopimelate aminotransferase of Lawsonia intracellularis (strain PHE/MN1-00).